Consider the following 426-residue polypeptide: Histidine--tRNA ligase (426 aa).

The protein belongs to the class-II aminoacyl-tRNA synthetase family. In terms of assembly, homodimer.

The protein localises to the cytoplasm. The enzyme catalyses tRNA(His) + L-histidine + ATP = L-histidyl-tRNA(His) + AMP + diphosphate + H(+). This chain is Histidine--tRNA ligase, found in Streptococcus pyogenes serotype M28 (strain MGAS6180).